A 252-amino-acid chain; its full sequence is Protein IRON-RELATED TRANSCRIPTION FACTOR 3 (252 aa).

Residues 36–49 (PRKVHKSEREKLKR) form a basic motif region. Residues 36 to 86 (PRKVHKSEREKLKRGHLNDLFGELGNMLEADRQSNGKACILTDTTRILRDL) form the bHLH domain. The helix-loop-helix motif stretch occupies residues 50-86 (GHLNDLFGELGNMLEADRQSNGKACILTDTTRILRDL). A coiled-coil region spans residues 76-131 (LTDTTRILRDLLSQVKSLRQENSTLQNESNYVTMERNELQDENGALRSEISDLQNE). Positions 135-252 (RATGSPGWGH…GLPRMEDEQM (118 aa)) are disordered. Positions 162-176 (PSQQPMQPSPMTTST) are enriched in low complexity. Acidic residues predominate over residues 208 to 219 (PAEDPEPSEDQE).

The protein belongs to the bHLH protein family.

It localises to the nucleus. Transcription factor that acts as a negative regulator of the iron deficiency response. Suppresses the induction of iron deficiency responsive genes, such as NAS1, NAS2, IRO2, IRT1, YSL15, and NRAMP1. This Oryza sativa subsp. japonica (Rice) protein is Protein IRON-RELATED TRANSCRIPTION FACTOR 3.